A 1230-amino-acid polypeptide reads, in one-letter code: Cullin-associated NEDD8-dissociated protein 1 (1230 aa).

Residue alanine 2 is modified to N-acetylalanine. HEAT repeat units follow at residues 2–39, 44–81, 83–119, 131–165, 171–208, 210–247, 248–282, 289–366, 370–407, 424–467, 471–510, and 515–552; these read ASAS…KDSI, DSER…KVKE, QVET…ELPP, CKKI…LSRQ, NFHP…SCGN, VFVD…QAGH, RIGE…FESF, EVYP…TRHE, EFYK…QTRP, PLTM…VLPG, QHIP…NHSP, and PHVQ…VIRP. A disordered region spans residues 315–344; the sequence is DEDEDENAMDADGGDDDDQGSDDEYSDDDD. At serine 335 the chain carries Phosphoserine. Phosphoserine is present on serine 558. HEAT repeat units lie at residues 563 to 602, 606 to 643, 646 to 683, 688 to 725, 729 to 768, 770 to 808, 809 to 845, 852 to 889, 890 to 927, 928 to 960, 961 to 998, 1002 to 1039, 1043 to 1097, 1099 to 1133, and 1140 to 1189; these read PYIK…NLGD, PDLS…LKID, PVLG…NYSD, AMID…VYPS, KISG…TGTN, LGYM…ALTR, ACPK…LGEV, SGQL…GNLP, EYLP…GLKP, YVEN…KLTL, IDPE…DHPQ, PLLK…NKPS, DLLD…DSCL, RLDI…LSTL, and QRLD…IPEA. N6-acetyllysine is present on lysine 971.

Belongs to the CAND family. As to quaternary structure, interacts with TBP. Part of a complex that contains CUL1 and RBX1. Interacts with unneddylated cullins: interacts with CUL1, CUL2, CUL3, CUL4A, CUL4B and CUL5. Does not bind neddylated CUL1. Interaction with cullins is abolished in presence of COMMD1, which antagonizes with CAND1 for interacting with cullins. Interacts with ERCC6. Interacts with DCUN1D1, DCUN1D2, DCUN1D3, DCUN1D4 and DCUN1D5; these interactions are bridged by cullins and strongly inhibits the neddylation of cullins.

The protein localises to the cytoplasm. Its subcellular location is the nucleus. Functionally, key assembly factor of SCF (SKP1-CUL1-F-box protein) E3 ubiquitin ligase complexes that promotes the exchange of the substrate-recognition F-box subunit in SCF complexes, thereby playing a key role in the cellular repertoire of SCF complexes. Acts as a F-box protein exchange factor. The exchange activity of CAND1 is coupled with cycles of neddylation conjugation: in the deneddylated state, cullin-binding CAND1 binds CUL1-RBX1, increasing dissociation of the SCF complex and promoting exchange of the F-box protein. Probably plays a similar role in other cullin-RING E3 ubiquitin ligase complexes. The sequence is that of Cullin-associated NEDD8-dissociated protein 1 (Cand1) from Mus musculus (Mouse).